Consider the following 610-residue polypeptide: Fimbrin (610 aa).

EF-hand domains lie at 7 to 42 and 43 to 78; these read SEISEFKASFNQFDENGDGQISALELQKILTKCGEK and VTGVEVRDMIKEVDTDGNGSIDFKEFLQVMQKARQH. Residues D20, N22, D24, Q26, E31, D56, D58, N60, S62, and E67 each coordinate Ca(2+). Actin-binding stretches follow at residues 102–365 and 366–608; these read YSGS…NTHP and ALEP…QVEM. 4 Calponin-homology (CH) domains span residues 116–232, 260–365, 379–488, and 501–608; these read DEEK…KIGL, LPVE…NTHP, TREE…RGHV, and PIAD…QVEM.

In terms of biological role, binds to actin. The polypeptide is Fimbrin (fimA) (Dictyostelium discoideum (Social amoeba)).